The sequence spans 356 residues: Putative mitogen-activated protein kinase 14C (356 aa).

In terms of domain architecture, Protein kinase spans 20-305 (YEFVRFLGGG…AAEAMLHPYL (286 aa)). ATP is bound by residues 26–34 (LGGGSFGQV) and K49. The active-site Proton acceptor is the D147. T177 carries the post-translational modification Phosphothreonine.

This sequence belongs to the protein kinase superfamily. CMGC Ser/Thr protein kinase family. MAP kinase subfamily. Mg(2+) serves as cofactor. In terms of processing, the phosphorylation on Thr-177 activates the enzyme. A conserved Tyr, which must also be phosphorylated to activate the enzyme in closely related sequences, is replaced by His-179 in this sequence.

The catalysed reaction is L-seryl-[protein] + ATP = O-phospho-L-seryl-[protein] + ADP + H(+). It carries out the reaction L-threonyl-[protein] + ATP = O-phospho-L-threonyl-[protein] + ADP + H(+). Kinase involved in a signal transduction pathway. The sequence is that of Putative mitogen-activated protein kinase 14C (p38c) from Drosophila melanogaster (Fruit fly).